Consider the following 482-residue polypeptide: MGDAESTSKTSLLLPVERVENVTWRDLRDGLFTAELKRLICFAAPMAAVVIAQFMLQIISMVMVGHLGNLSLASASLASSFCNVTGFSFIVGLSCALDTLSGQAYGAKLYRKVGVQTYTAMFCLALVCLPLTLIWLNMETLLVFLGQDPSIAHEAGRYAACLIPGLFAYAVLQPLTRYFQNQSMITPLLITSCFVFCLHVPLCWLLVYKSGLGNLGGALALSFSNCLYTIILGSLMCFSSACSETRAPLSMEIFDGIGEFFRYALPSAAMICLEWWSYELIILLSGLLPNPQLETSVLSVCLQTTATVYSIHLAIAAAASTRISNELGAGNSRAANIVVYAAMSLAVVEILILSTSLLVGRNVFGHVFSSDKETIDYVAKMAPLVSISLILDGLQGVLSGIARGCGWQHIGAYINLGAFYLWGIPIAASLAFWIHLKGVGLWIGIQAGAVLQTLLLTLVTGCTNWESQADKARNRMALAYGT.

12 helical membrane-spanning segments follow: residues leucine 39–isoleucine 59, leucine 77–leucine 97, leucine 124–phenylalanine 144, alanine 159–phenylalanine 179, leucine 188–tyrosine 208, alanine 218–phenylalanine 238, alanine 268–leucine 288, valine 297–alanine 317, isoleucine 337–leucine 357, methionine 381–isoleucine 401, leucine 416–leucine 436, and valine 439–valine 459.

Belongs to the multi antimicrobial extrusion (MATE) (TC 2.A.66.1) family.

It localises to the membrane. The polypeptide is Protein DETOXIFICATION 13 (Arabidopsis thaliana (Mouse-ear cress)).